Reading from the N-terminus, the 1012-residue chain is Vacuolar membrane protease (1012 aa).

The Cytoplasmic portion of the chain corresponds to 1–60; sequence MRRSTDPRNLLVRRGPLLVDGESAISELDPGFFPTGDAPKMSSTTRRRFNLIAFTPGPVT. Residues 61-81 traverse the membrane as a helical segment; the sequence is VISSLVYLALLIPLLLVHTIV. At 82 to 432 the chain is on the vacuolar side; it reads PSAPKSNPKG…SFAVFRLHTL (351 aa). Asn159 carries an N-linked (GlcNAc...) asparagine glycan. His215 and Asp227 together coordinate Zn(2+). Glu261 (proton acceptor) is an active-site residue. Zn(2+) is bound by residues Glu262, Glu287, and His360. The chain crosses the membrane as a helical span at residues 433-453; it reads FAISVTLLVVCPIVLFVIGII. The Cytoplasmic portion of the chain corresponds to 454–487; sequence LSKMDKMYLFSIHETIPETKEKVSVRGLRGLFRY. The helical transmembrane segment at 488–508 threads the bilayer; sequence PIILVVSSGILIGLSYLLAKV. Residues 509–518 are Vacuolar-facing; sequence NPFIVHSSSY. A helical transmembrane segment spans residues 519–539; that stretch reads AVWSMMLSSWIFMTWFLSCIA. Over 540–550 the chain is Cytoplasmic; sequence DFFRPSALHRA. The helical transmembrane segment at 551–571 threads the bilayer; it reads YTFTWQLLVMWVLLVISTVYV. The Vacuolar segment spans residues 572 to 575; the sequence is NQHD. A helical membrane pass occupies residues 576 to 596; the sequence is IAAGYFIVFYFAGTFLATLIS. At 597-710 the chain is on the cytoplasmic side; it reads YLELFALPNK…WSASLPTWTW (114 aa). A compositionally biased stretch (polar residues) spans 614–629; that stretch reads SQYPSRLGSNRSSRIL. Positions 614–660 are disordered; it reads SQYPSRLGSNRSSRILSPSADELPTGGDNNGEIYDGEEEPTESSSLL. A helical membrane pass occupies residues 711-731; the sequence is VLQFLFVGPVVIMFIGQLGLF. Topologically, residues 732–743 are vacuolar; it reads LTSAMNQVGADG. A helical transmembrane segment spans residues 744–764; it reads VGLLVVYIAIAVFSVLLLIPL. Residues 765 to 777 lie on the Cytoplasmic side of the membrane; it reads SPFIHRFTYHVPT. Residues 778–798 traverse the membrane as a helical segment; the sequence is FLLLVFIATLIYNLAAFPFSA. Topologically, residues 799 to 1012 are vacuolar; the sequence is ENRLKIFFVQ…DGLVEVSRGF (214 aa). 2 N-linked (GlcNAc...) asparagine glycosylation sites follow: Asn842 and Asn878.

Belongs to the peptidase M28 family. Zn(2+) is required as a cofactor.

It is found in the vacuole membrane. Its function is as follows. May be involved in vacuolar sorting and osmoregulation. The sequence is that of Vacuolar membrane protease from Coccidioides posadasii (strain C735) (Valley fever fungus).